A 411-amino-acid chain; its full sequence is Serine hydroxymethyltransferase (411 aa).

(6S)-5,6,7,8-tetrahydrofolate-binding positions include leucine 119 and 123 to 125; that span reads GHL. Lysine 228 carries the post-translational modification N6-(pyridoxal phosphate)lysine. A (6S)-5,6,7,8-tetrahydrofolate-binding site is contributed by 351–353; it reads SPF.

It belongs to the SHMT family. In terms of assembly, homodimer. Pyridoxal 5'-phosphate is required as a cofactor.

The protein resides in the cytoplasm. It catalyses the reaction (6R)-5,10-methylene-5,6,7,8-tetrahydrofolate + glycine + H2O = (6S)-5,6,7,8-tetrahydrofolate + L-serine. It functions in the pathway one-carbon metabolism; tetrahydrofolate interconversion. Its pathway is amino-acid biosynthesis; glycine biosynthesis; glycine from L-serine: step 1/1. In terms of biological role, catalyzes the reversible interconversion of serine and glycine with tetrahydrofolate (THF) serving as the one-carbon carrier. This reaction serves as the major source of one-carbon groups required for the biosynthesis of purines, thymidylate, methionine, and other important biomolecules. Also exhibits THF-independent aldolase activity toward beta-hydroxyamino acids, producing glycine and aldehydes, via a retro-aldol mechanism. The sequence is that of Serine hydroxymethyltransferase from Clostridium botulinum (strain Alaska E43 / Type E3).